A 158-amino-acid chain; its full sequence is 2-C-methyl-D-erythritol 2,4-cyclodiphosphate synthase (158 aa).

Residues D9 and H11 each contribute to the a divalent metal cation site. 4-CDP-2-C-methyl-D-erythritol 2-phosphate is bound by residues 9 to 11 and 35 to 36; these read DVH and HS. H43 lines the a divalent metal cation pocket. 4-CDP-2-C-methyl-D-erythritol 2-phosphate contacts are provided by residues 57-59, 62-66, 133-136, F140, and R143; these read DLG, FPDTD, and TTTE.

It belongs to the IspF family. In terms of assembly, homotrimer. Requires a divalent metal cation as cofactor.

It catalyses the reaction 4-CDP-2-C-methyl-D-erythritol 2-phosphate = 2-C-methyl-D-erythritol 2,4-cyclic diphosphate + CMP. Its pathway is isoprenoid biosynthesis; isopentenyl diphosphate biosynthesis via DXP pathway; isopentenyl diphosphate from 1-deoxy-D-xylulose 5-phosphate: step 4/6. Involved in the biosynthesis of isopentenyl diphosphate (IPP) and dimethylallyl diphosphate (DMAPP), two major building blocks of isoprenoid compounds. Catalyzes the conversion of 4-diphosphocytidyl-2-C-methyl-D-erythritol 2-phosphate (CDP-ME2P) to 2-C-methyl-D-erythritol 2,4-cyclodiphosphate (ME-CPP) with a corresponding release of cytidine 5-monophosphate (CMP). This chain is 2-C-methyl-D-erythritol 2,4-cyclodiphosphate synthase, found in Desulfitobacterium hafniense (strain DSM 10664 / DCB-2).